Consider the following 121-residue polypeptide: uncharacterized protein (121 aa).

A helical transmembrane segment spans residues 11–31 (IFQFFVFPFYYFLLIITEIGF).

Its subcellular location is the membrane. This is an uncharacterized protein from Schizosaccharomyces pombe (strain 972 / ATCC 24843) (Fission yeast).